Here is a 20-residue protein sequence, read N- to C-terminus: Unknown protein NF009 from 2D-PAGE (20 aa).

Residues Ala1 to Pro20 are disordered.

This is Unknown protein NF009 from 2D-PAGE from Naegleria fowleri (Brain eating amoeba).